A 417-amino-acid chain; its full sequence is Phosphoglycerate kinase 1 (417 aa).

At S2 the chain carries N-acetylserine. A phosphoserine mark is found at S2 and S4. K6 carries the post-translational modification N6-succinyllysine. Residue K11 is modified to N6-acetyllysine. (2R)-3-phosphoglycerate is bound by residues V23, D24, F25, N26, Q38, and R39. Residues 38–43 (QRIKAA) are mitochondrial targeting region exposed following cis-trans isomerization by PIN1 and recognized by the TOM complex for mitochondrial translocation of the protein. K48 is modified (N6-acetyllysine; alternate). An N6-succinyllysine; alternate modification is found at K48. 4 residues coordinate (2R)-3-phosphoglycerate: S62, H63, G65, and R66. An N6-acetyllysine modification is found at K75. Y76 is modified (phosphotyrosine). An N6-acetyllysine mark is found at K86 and K91. K97 carries the N6-acetyllysine; alternate modification. Position 97 is an N6-(2-hydroxyisobutyryl)lysine; alternate (K97). Positions 122 and 123 each coordinate (2R)-3-phosphoglycerate. K131 is subject to N6-acetyllysine; alternate. K131 bears the N6-malonyllysine; alternate mark. Residue K146 is modified to N6-acetyllysine. H170 and R171 together coordinate (2R)-3-phosphoglycerate. Position 191 is an N6-succinyllysine (K191). Y196 carries the phosphotyrosine modification. N6-acetyllysine is present on K199. Phosphoserine is present on S203. Residue G214 coordinates ADP. CDP is bound at residue G214. AMP is bound by residues A215 and K216. A215 provides a ligand contact to ATP. A215 contacts Mg(2+). Position 216 is an N6-(2-hydroxyisobutyryl)lysine (K216). Mg(2+) contacts are provided by A218 and D219. Position 219 (D219) interacts with CDP. K220 lines the AMP pocket. Residue K220 participates in ATP binding. Residue K220 is modified to N6-(2-hydroxyisobutyryl)lysine. G238 serves as a coordination point for ADP. CDP is bound at residue G238. Residue G239 participates in AMP binding. G239 is an ATP binding site. An N6-acetyllysine mark is found at K267 and K291. G313 lines the AMP pocket. G313 contributes to the ATP binding site. K323 carries the post-translational modification N6-(2-hydroxyisobutyryl)lysine. CDP is bound by residues G338, V340, and F343. F343 lines the ADP pocket. An AMP-binding site is contributed by E344. Residue E344 participates in ATP binding. S354 is modified (phosphoserine). K361 carries the post-translational modification N6-acetyllysine. ATP contacts are provided by D375 and T376. D375 provides a ligand contact to Mg(2+).

Belongs to the phosphoglycerate kinase family. As to quaternary structure, monomer. Interacts with kinase MAPK1/ERK2; the interaction is direct, occurs under hypoxic conditions, and promotes its interaction with PIN1. Interacts with peptidyl-prolyl cis-trans isomerase PIN1; the interaction is direct, occurs under hypoxic conditions, and targets the protein to the mitochondrion by promoting interactions with the TOM complex. Interacts with mitochondrial circRNA mcPGK1 (via its 2nd stem-loop); the interaction is direct and targets the protein to the mitochondrion by promoting interactions with the TOM complex. Interacts with pyruvate dehydrogenase kinase PDK1; the interaction is direct, occurs under hypoxic conditions and leads to PDK1-mediated inhibition of pyruvate dehydrogenase complex activity. It depends on Mg(2+) as a cofactor. Post-translationally, phosphorylated at Ser-203 by MAPK1/ERK2 under hypoxic conditions, which promotes its mitochondrial targeting.

The protein resides in the cytoplasm. It localises to the cytosol. The protein localises to the mitochondrion matrix. It carries out the reaction (2R)-3-phosphoglycerate + ATP = (2R)-3-phospho-glyceroyl phosphate + ADP. The enzyme catalyses L-seryl-[protein] + ATP = O-phospho-L-seryl-[protein] + ADP + H(+). It participates in carbohydrate degradation; glycolysis; pyruvate from D-glyceraldehyde 3-phosphate: step 2/5. Its function is as follows. Catalyzes one of the two ATP producing reactions in the glycolytic pathway via the reversible conversion of 1,3-diphosphoglycerate to 3-phosphoglycerate. Both L- and D- forms of purine and pyrimidine nucleotides can be used as substrates, but the activity is much lower on pyrimidines. In addition to its role as a glycolytic enzyme, it seems that PGK-1 acts as a polymerase alpha cofactor protein (primer recognition protein). Acts as a protein kinase when localized to the mitochondrion where it phosphorylates pyruvate dehydrogenase kinase PDK1 to inhibit pyruvate dehydrogenase complex activity and suppress the formation of acetyl-coenzyme A from pyruvate, and consequently inhibit oxidative phosphorylation and promote glycolysis. May play a role in sperm motility. In Rattus norvegicus (Rat), this protein is Phosphoglycerate kinase 1 (Pgk1).